We begin with the raw amino-acid sequence, 712 residues long: MTGIDLNTVEEDEEEAAEEVAANGSSPAPARAGAVCLELWHACAGPVAPLPRKGGVVVYLPQGHLEHLGDAPAAAAAAAAVPPHVFCRVVDVTLLADAATDEVYAQLSLVPEKEEVARRADDGEGEDGDGMKQRFARMPHMFCKTLTASDTSTHGGFSVPRRAAEDCFPPLDYSQQRPSQELVAKDLHSTEWRFRHIYRGQPRRHLLTTGWSAFVNKKKLVSGDAVLFLRGDDGELRLGVRRAAQLKNGSAFPALYNQCSNLGTLANVAHAVATESVFNIYYNPRLSQSEFIVPYWKFMKSLSQPFSVGLRFKMRYESEDATERRYTGIITGSGDTDPMWHGSKWKCLLVRWDDDAEFRRPNRVSPWEIELTSSVSGSHLSTPHSKRLKPCLPHVNPEYMVPRGGGCPDFAESAQFHKVLQGQELLGFKSHGGTAAATSQPCEARHLQYIDERSCSSDASNSILGVPRLGDRAPLGNPGFSYHCSGFGESHRLQKVLQGQELFRPYRGTLVDASMGSNGFHQQDSPRAPGVVNKWQAQLHGRAAFHGPPALALPSQSSSPPSVLMFQQANSKMPRLEFGHGQLDKHENDRRVRFGPSEGIERREQRIPLQPYPTSGEVIDGQVTVEKSHSPGRHGKDGPDNKAVGTNSCKIFGISLTEKVPAREELDDGDANYSLQSLKQVPKSLGNSCATVHEQRPVVGRVIDISTMDMMI.

The segment at residues 142–244 (FCKTLTASDT…ELRLGVRRAA (103 aa)) is a DNA-binding region (TF-B3).

It belongs to the ARF family. Homo and heterodimers. Expressed in roots, culms, leaves and young panicles.

Its subcellular location is the nucleus. In terms of biological role, auxin response factors (ARFs) are transcriptional factors that bind specifically to the DNA sequence 5'-TGTCTC-3' found in the auxin-responsive promoter elements (AuxREs). The chain is Auxin response factor 15 (ARF15) from Oryza sativa subsp. japonica (Rice).